The following is a 716-amino-acid chain: Fatty acid oxidation complex subunit alpha (716 aa).

Residues 1 to 189 are enoyl-CoA hydratase/isomerase; the sequence is MIYQSPTIQV…KVGAIDAVVA (189 aa). Residue Asp-296 participates in substrate binding. A 3-hydroxyacyl-CoA dehydrogenase region spans residues 311 to 716; the sequence is KDVNQAAVLG…AANNGSYYQA (406 aa). Residues Met-324, Asp-343, 400–402, Lys-407, and Ser-429 contribute to the NAD(+) site; that span reads VVE. The active-site For 3-hydroxyacyl-CoA dehydrogenase activity is the His-450. Asn-453 contributes to the NAD(+) binding site. Substrate-binding residues include Asn-500 and Tyr-660.

This sequence in the N-terminal section; belongs to the enoyl-CoA hydratase/isomerase family. In the C-terminal section; belongs to the 3-hydroxyacyl-CoA dehydrogenase family. Heterotetramer of two alpha chains (FadB) and two beta chains (FadA).

The enzyme catalyses a (3S)-3-hydroxyacyl-CoA + NAD(+) = a 3-oxoacyl-CoA + NADH + H(+). It catalyses the reaction a (3S)-3-hydroxyacyl-CoA = a (2E)-enoyl-CoA + H2O. The catalysed reaction is a 4-saturated-(3S)-3-hydroxyacyl-CoA = a (3E)-enoyl-CoA + H2O. It carries out the reaction (3S)-3-hydroxybutanoyl-CoA = (3R)-3-hydroxybutanoyl-CoA. The enzyme catalyses a (3Z)-enoyl-CoA = a 4-saturated (2E)-enoyl-CoA. It catalyses the reaction a (3E)-enoyl-CoA = a 4-saturated (2E)-enoyl-CoA. It functions in the pathway lipid metabolism; fatty acid beta-oxidation. Functionally, involved in the aerobic and anaerobic degradation of long-chain fatty acids via beta-oxidation cycle. Catalyzes the formation of 3-oxoacyl-CoA from enoyl-CoA via L-3-hydroxyacyl-CoA. It can also use D-3-hydroxyacyl-CoA and cis-3-enoyl-CoA as substrate. This chain is Fatty acid oxidation complex subunit alpha, found in Shewanella frigidimarina (strain NCIMB 400).